An 84-amino-acid chain; its full sequence is NAD(P)H-quinone oxidoreductase subunit O (84 aa).

This sequence belongs to the complex I NdhO subunit family. In terms of assembly, NDH-1 can be composed of about 15 different subunits; different subcomplexes with different compositions have been identified which probably have different functions.

Its subcellular location is the cellular thylakoid membrane. The catalysed reaction is a plastoquinone + NADH + (n+1) H(+)(in) = a plastoquinol + NAD(+) + n H(+)(out). The enzyme catalyses a plastoquinone + NADPH + (n+1) H(+)(in) = a plastoquinol + NADP(+) + n H(+)(out). Its function is as follows. NDH-1 shuttles electrons from an unknown electron donor, via FMN and iron-sulfur (Fe-S) centers, to quinones in the respiratory and/or the photosynthetic chain. The immediate electron acceptor for the enzyme in this species is believed to be plastoquinone. Couples the redox reaction to proton translocation, and thus conserves the redox energy in a proton gradient. Cyanobacterial NDH-1 also plays a role in inorganic carbon-concentration. This chain is NAD(P)H-quinone oxidoreductase subunit O, found in Parasynechococcus marenigrum (strain WH8102).